The sequence spans 364 residues: Spermidine/putrescine import ATP-binding protein PotA (364 aa).

The ABC transporter domain maps to 5–235; the sequence is LSFKGVTKGF…PVNRFVADFI (231 aa). Residue 37–44 participates in ATP binding; it reads GPSGCGKT.

The protein belongs to the ABC transporter superfamily. Spermidine/putrescine importer (TC 3.A.1.11.1) family. As to quaternary structure, the complex is composed of two ATP-binding proteins (PotA), two transmembrane proteins (PotB and PotC) and a solute-binding protein (PotD).

Its subcellular location is the cell membrane. The enzyme catalyses ATP + H2O + polyamine-[polyamine-binding protein]Side 1 = ADP + phosphate + polyamineSide 2 + [polyamine-binding protein]Side 1.. In terms of biological role, part of the ABC transporter complex PotABCD involved in spermidine/putrescine import. Responsible for energy coupling to the transport system. This is Spermidine/putrescine import ATP-binding protein PotA from Staphylococcus haemolyticus (strain JCSC1435).